A 232-amino-acid polypeptide reads, in one-letter code: 5'-methylthioadenosine/S-adenosylhomocysteine nucleosidase (232 aa).

Catalysis depends on glutamate 12, which acts as the Proton acceptor. Residues glycine 78, valine 152, and methionine 173 to glutamate 174 each bind substrate. Residue aspartate 197 is the Proton donor of the active site.

This sequence belongs to the PNP/UDP phosphorylase family. MtnN subfamily. Homodimer.

The catalysed reaction is S-adenosyl-L-homocysteine + H2O = S-(5-deoxy-D-ribos-5-yl)-L-homocysteine + adenine. It catalyses the reaction S-methyl-5'-thioadenosine + H2O = 5-(methylsulfanyl)-D-ribose + adenine. The enzyme catalyses 5'-deoxyadenosine + H2O = 5-deoxy-D-ribose + adenine. It functions in the pathway amino-acid biosynthesis; L-methionine biosynthesis via salvage pathway; S-methyl-5-thio-alpha-D-ribose 1-phosphate from S-methyl-5'-thioadenosine (hydrolase route): step 1/2. Functionally, catalyzes the irreversible cleavage of the glycosidic bond in both 5'-methylthioadenosine (MTA) and S-adenosylhomocysteine (SAH/AdoHcy) to adenine and the corresponding thioribose, 5'-methylthioribose and S-ribosylhomocysteine, respectively. Also cleaves 5'-deoxyadenosine, a toxic by-product of radical S-adenosylmethionine (SAM) enzymes, into 5-deoxyribose and adenine. Thus, is required for in vivo function of the radical SAM enzymes biotin synthase and lipoic acid synthase, that are inhibited by 5'-deoxyadenosine accumulation. The chain is 5'-methylthioadenosine/S-adenosylhomocysteine nucleosidase from Buchnera aphidicola subsp. Acyrthosiphon pisum (strain 5A).